A 156-amino-acid chain; its full sequence is Small ribosomal subunit protein uS7 (156 aa).

Belongs to the universal ribosomal protein uS7 family. Part of the 30S ribosomal subunit. Contacts proteins S9 and S11.

One of the primary rRNA binding proteins, it binds directly to 16S rRNA where it nucleates assembly of the head domain of the 30S subunit. Is located at the subunit interface close to the decoding center, probably blocks exit of the E-site tRNA. The sequence is that of Small ribosomal subunit protein uS7 from Sodalis glossinidius (strain morsitans).